The sequence spans 302 residues: 4-diphosphocytidyl-2-C-methyl-D-erythritol kinase (302 aa).

Lys-27 is a catalytic residue. Residue 110-120 (PMGGGVGGGSS) coordinates ATP. The active site involves Asp-152.

It belongs to the GHMP kinase family. IspE subfamily.

The catalysed reaction is 4-CDP-2-C-methyl-D-erythritol + ATP = 4-CDP-2-C-methyl-D-erythritol 2-phosphate + ADP + H(+). Its pathway is isoprenoid biosynthesis; isopentenyl diphosphate biosynthesis via DXP pathway; isopentenyl diphosphate from 1-deoxy-D-xylulose 5-phosphate: step 3/6. Catalyzes the phosphorylation of the position 2 hydroxy group of 4-diphosphocytidyl-2C-methyl-D-erythritol. The chain is 4-diphosphocytidyl-2-C-methyl-D-erythritol kinase from Mannheimia succiniciproducens (strain KCTC 0769BP / MBEL55E).